Reading from the N-terminus, the 160-residue chain is Large ribosomal subunit protein eL29 (160 aa).

Positions 1–26 (MAKSKNHTTHNQSRKWHRNGIKKPRS) are enriched in basic residues. 2 disordered regions span residues 1–34 (MAKSKNHTTHNQSRKWHRNGIKKPRSQRYESLKG) and 115–160 (RLCQ…VKAP). An N6-methyllysine modification is found at K5. S31 is subject to Phosphoserine. The residue at position 33 (K33) is an N6-acetyllysine. Positions 126-160 (KAGAKAPAKAQASAPAQAPKGAQAPKGAQAPVKAP) are enriched in low complexity. 2 consecutive repeat copies span residues 127 to 134 (AGAKAPAK) and 135 to 142 (AQASAPAQ). Positions 127-142 (AGAKAPAKAQASAPAQ) are 2 X 8 AA tandem repeats of A-X-A-K-A-P-A-[KQ]. S138 is subject to Phosphoserine. Residue K145 is modified to N6-acetyllysine.

Belongs to the eukaryotic ribosomal protein eL29 family. Component of the large ribosomal subunit.

The protein resides in the cytoplasm. In terms of biological role, component of the large ribosomal subunit. The ribosome is a large ribonucleoprotein complex responsible for the synthesis of proteins in the cell. The chain is Large ribosomal subunit protein eL29 (Rpl29) from Mus musculus (Mouse).